The sequence spans 313 residues: tRNA dimethylallyltransferase (313 aa).

11 to 18 serves as a coordination point for ATP; sequence GPTAGGKT. 13 to 18 is a substrate binding site; it reads TAGGKT. Interaction with substrate tRNA regions lie at residues 36–39, 160–164, and 243–248; these read DSAL, QRIGR, and RCVGYR.

This sequence belongs to the IPP transferase family. Monomer. The cofactor is Mg(2+).

The catalysed reaction is adenosine(37) in tRNA + dimethylallyl diphosphate = N(6)-dimethylallyladenosine(37) in tRNA + diphosphate. In terms of biological role, catalyzes the transfer of a dimethylallyl group onto the adenine at position 37 in tRNAs that read codons beginning with uridine, leading to the formation of N6-(dimethylallyl)adenosine (i(6)A). The protein is tRNA dimethylallyltransferase of Neisseria meningitidis serogroup C / serotype 2a (strain ATCC 700532 / DSM 15464 / FAM18).